A 454-amino-acid polypeptide reads, in one-letter code: Bifunctional protein GlmU (454 aa).

A pyrophosphorylase region spans residues 1–228; it reads MNKCAIILAA…FEETLGVNSR (228 aa). Residues 8-11, Lys22, Gln73, and 78-79 contribute to the UDP-N-acetyl-alpha-D-glucosamine site; these read LAAG and GT. Residue Asp103 coordinates Mg(2+). Gly140, Glu154, Asn169, and Asn226 together coordinate UDP-N-acetyl-alpha-D-glucosamine. Asn226 contributes to the Mg(2+) binding site. The segment at 229–249 is linker; that stretch reads AELAKVESIMRNRINRTHLDN. Residues 250-454 form an N-acetyltransferase region; sequence GVTIIDPLNT…EGWVERKKLK (205 aa). UDP-N-acetyl-alpha-D-glucosamine-binding residues include Arg331 and Lys349. His361 functions as the Proton acceptor in the catalytic mechanism. Residues Tyr364 and Asn375 each coordinate UDP-N-acetyl-alpha-D-glucosamine. Acetyl-CoA-binding positions include 384–385, Ala421, and Arg438; that span reads NY.

It in the N-terminal section; belongs to the N-acetylglucosamine-1-phosphate uridyltransferase family. This sequence in the C-terminal section; belongs to the transferase hexapeptide repeat family. As to quaternary structure, homotrimer. Mg(2+) is required as a cofactor.

The protein localises to the cytoplasm. The enzyme catalyses alpha-D-glucosamine 1-phosphate + acetyl-CoA = N-acetyl-alpha-D-glucosamine 1-phosphate + CoA + H(+). It catalyses the reaction N-acetyl-alpha-D-glucosamine 1-phosphate + UTP + H(+) = UDP-N-acetyl-alpha-D-glucosamine + diphosphate. It participates in nucleotide-sugar biosynthesis; UDP-N-acetyl-alpha-D-glucosamine biosynthesis; N-acetyl-alpha-D-glucosamine 1-phosphate from alpha-D-glucosamine 6-phosphate (route II): step 2/2. The protein operates within nucleotide-sugar biosynthesis; UDP-N-acetyl-alpha-D-glucosamine biosynthesis; UDP-N-acetyl-alpha-D-glucosamine from N-acetyl-alpha-D-glucosamine 1-phosphate: step 1/1. Its pathway is bacterial outer membrane biogenesis; LPS lipid A biosynthesis. Its function is as follows. Catalyzes the last two sequential reactions in the de novo biosynthetic pathway for UDP-N-acetylglucosamine (UDP-GlcNAc). The C-terminal domain catalyzes the transfer of acetyl group from acetyl coenzyme A to glucosamine-1-phosphate (GlcN-1-P) to produce N-acetylglucosamine-1-phosphate (GlcNAc-1-P), which is converted into UDP-GlcNAc by the transfer of uridine 5-monophosphate (from uridine 5-triphosphate), a reaction catalyzed by the N-terminal domain. This is Bifunctional protein GlmU from Clostridium perfringens (strain ATCC 13124 / DSM 756 / JCM 1290 / NCIMB 6125 / NCTC 8237 / Type A).